The sequence spans 128 residues: Large ribosomal subunit protein bL12 (128 aa).

Belongs to the bacterial ribosomal protein bL12 family. Homodimer. Part of the ribosomal stalk of the 50S ribosomal subunit. Forms a multimeric L10(L12)X complex, where L10 forms an elongated spine to which 2 to 4 L12 dimers bind in a sequential fashion. Binds GTP-bound translation factors.

Functionally, forms part of the ribosomal stalk which helps the ribosome interact with GTP-bound translation factors. Is thus essential for accurate translation. The chain is Large ribosomal subunit protein bL12 from Picosynechococcus sp. (strain ATCC 27264 / PCC 7002 / PR-6) (Agmenellum quadruplicatum).